The sequence spans 120 residues: Large ribosomal subunit protein uL14 (120 aa).

It belongs to the universal ribosomal protein uL14 family. Part of the 50S ribosomal subunit. Forms a cluster with proteins L3 and L19. In the 70S ribosome, L14 and L19 interact and together make contacts with the 16S rRNA in bridges B5 and B8.

Binds to 23S rRNA. Forms part of two intersubunit bridges in the 70S ribosome. This is Large ribosomal subunit protein uL14 from Aster yellows witches'-broom phytoplasma (strain AYWB).